The primary structure comprises 183 residues: Ribosome rescue factor SmrB (183 aa).

The region spanning 98–173 (LDLHGLTQLQ…GDAALLVLIE (76 aa)) is the Smr domain.

It belongs to the SmrB family. In terms of assembly, associates with collided ribosomes, but not with correctly translating polysomes.

Functionally, acts as a ribosome collision sensor. Detects stalled/collided disomes (pairs of ribosomes where the leading ribosome is stalled and a second ribosome has collided with it) and endonucleolytically cleaves mRNA at the 5' boundary of the stalled ribosome. Stalled/collided disomes form a new interface (primarily via the 30S subunits) that binds SmrB. Cleaved mRNA becomes available for tmRNA ligation, leading to ribosomal subunit dissociation and rescue of stalled ribosomes. The protein is Ribosome rescue factor SmrB of Shigella boydii serotype 18 (strain CDC 3083-94 / BS512).